Here is a 432-residue protein sequence, read N- to C-terminus: Adenylosuccinate synthetase (432 aa).

GTP-binding positions include 13–19 and 41–43; these read GDEGKGK and GHT. The Proton acceptor role is filled by Asp-14. Residues Asp-14 and Gly-41 each coordinate Mg(2+). Residues 14–17, 39–42, Thr-131, Arg-145, Gln-226, Thr-241, and Arg-305 each bind IMP; these read DEGK and NAGH. The active-site Proton donor is the His-42. Position 301-307 (301-307) interacts with substrate; that stretch reads SVTGRAR. Residues Arg-307, 333–335, and 416–418 contribute to the GTP site; these read KLD and STG.

It belongs to the adenylosuccinate synthetase family. Homodimer. Requires Mg(2+) as cofactor.

Its subcellular location is the cytoplasm. It catalyses the reaction IMP + L-aspartate + GTP = N(6)-(1,2-dicarboxyethyl)-AMP + GDP + phosphate + 2 H(+). It participates in purine metabolism; AMP biosynthesis via de novo pathway; AMP from IMP: step 1/2. Its function is as follows. Plays an important role in the de novo pathway of purine nucleotide biosynthesis. Catalyzes the first committed step in the biosynthesis of AMP from IMP. This chain is Adenylosuccinate synthetase, found in Neisseria meningitidis serogroup A / serotype 4A (strain DSM 15465 / Z2491).